The primary structure comprises 243 residues: Ribosomal RNA small subunit methyltransferase G (243 aa).

S-adenosyl-L-methionine contacts are provided by residues G97, L102, 148–149 (VE), and R161.

Belongs to the methyltransferase superfamily. RNA methyltransferase RsmG family.

It is found in the cytoplasm. It carries out the reaction guanosine(527) in 16S rRNA + S-adenosyl-L-methionine = N(7)-methylguanosine(527) in 16S rRNA + S-adenosyl-L-homocysteine. Functionally, specifically methylates the N7 position of guanine in position 527 of 16S rRNA. The protein is Ribosomal RNA small subunit methyltransferase G of Paracidovorax citrulli (strain AAC00-1) (Acidovorax citrulli).